We begin with the raw amino-acid sequence, 247 residues long: LHFPL tetraspan subfamily member 4 protein (247 aa).

Helical transmembrane passes span 22-42 (IGVL…VVFI), 97-117 (FFVL…ALFF), 127-147 (ICAW…MIFP), and 178-198 (ILAI…FVLG).

It belongs to the LHFP family. As to quaternary structure, interacts with GABA(A) receptor subunits. Interacts with GABRB3. Interacts with GABRA2. Interacts with GABRG2. Interacts with GABRA1. Identified in a complex of 720 kDa composed of LHFPL4, NLGN2, GABRA1, GABRB2, GABRG2 and GABRB3. Interacts with NLGN2; leading to mutual regulation of protein level and synaptic clustering. In terms of tissue distribution, highly expressed in the brain, including the cortex, hippocampus, midbrain, olfactory bulb pona plus medulla (at protein level). Expressed in the in the cerebellar granular layer and in granular layer. Colocalized with GPHN at inhibitory synapses. Weakly expressed in heart, testis, lung, intestine, vagina, ovary and uterus.

It localises to the cell projection. It is found in the dendrite. The protein localises to the postsynaptic cell membrane. Functionally, plays a role in the regulation of inhibitory synapse formation and function by being involved in maintening gamma-aminobutyric acid receptors (GABAARs) clustering and their associated scaffold proteins at inhibitory synaptic sites. Acts in concert with NLGN2 to recruit or stabilize GABAARs. The polypeptide is LHFPL tetraspan subfamily member 4 protein (Mus musculus (Mouse)).